The following is a 124-amino-acid chain: Holo-[acyl-carrier-protein] synthase (124 aa).

Residues D8 and E60 each contribute to the Mg(2+) site.

It belongs to the P-Pant transferase superfamily. AcpS family. The cofactor is Mg(2+).

The protein localises to the cytoplasm. The catalysed reaction is apo-[ACP] + CoA = holo-[ACP] + adenosine 3',5'-bisphosphate + H(+). Functionally, transfers the 4'-phosphopantetheine moiety from coenzyme A to a Ser of acyl-carrier-protein. This Wolbachia pipientis subsp. Culex pipiens (strain wPip) protein is Holo-[acyl-carrier-protein] synthase.